We begin with the raw amino-acid sequence, 210 residues long: N-(5'-phosphoribosyl)anthranilate isomerase (210 aa).

It belongs to the TrpF family.

It catalyses the reaction N-(5-phospho-beta-D-ribosyl)anthranilate = 1-(2-carboxyphenylamino)-1-deoxy-D-ribulose 5-phosphate. It participates in amino-acid biosynthesis; L-tryptophan biosynthesis; L-tryptophan from chorismate: step 3/5. The polypeptide is N-(5'-phosphoribosyl)anthranilate isomerase (Methanococcus aeolicus (strain ATCC BAA-1280 / DSM 17508 / OCM 812 / Nankai-3)).